The sequence spans 343 residues: Phosphate acyltransferase (343 aa).

The protein belongs to the PlsX family. Homodimer. Probably interacts with PlsY.

The protein resides in the cytoplasm. The enzyme catalyses a fatty acyl-[ACP] + phosphate = an acyl phosphate + holo-[ACP]. Its pathway is lipid metabolism; phospholipid metabolism. Catalyzes the reversible formation of acyl-phosphate (acyl-PO(4)) from acyl-[acyl-carrier-protein] (acyl-ACP). This enzyme utilizes acyl-ACP as fatty acyl donor, but not acyl-CoA. This Neorickettsia sennetsu (strain ATCC VR-367 / Miyayama) (Ehrlichia sennetsu) protein is Phosphate acyltransferase.